The following is a 113-amino-acid chain: UPF0482 protein YnfB (113 aa).

An N-terminal signal peptide occupies residues 1–28 (MKITLSKRIGLLAILLPCALALSTTVHA).

Belongs to the UPF0482 family.

The protein is UPF0482 protein YnfB of Escherichia coli O8 (strain IAI1).